We begin with the raw amino-acid sequence, 2896 residues long: 3'-5' exoribonuclease HELZ2 (2896 aa).

2 C3H1-type zinc fingers span residues 90–114 (VCHY…RSRE) and 217–246 (GQPP…HSAV). Residues 287-311 (LYCPACLVTCHSQEAFENHCASSEH) form a C2H2-type; atypical zinc finger. The C3H1-type 3 zinc-finger motif lies at 327–357 (SPPPGLSKFELCPKPDLCEYGDACTKAHSAQ). A UvrD-like helicase ATP-binding domain is found at 770–1126 (VALIAGWGPG…VVLSTVHTCQ (357 aa)). 791 to 798 (GPFGTGKT) serves as a coordination point for ATP. The interaction with THRAP3 stretch occupies residues 810-1306 (RRPETKVLIC…ESTEAEDAEA (497 aa)). Residues 914–917 (DEAA) carry the DEAA box motif. Ser1253 carries the phosphoserine modification. Short sequence motifs (LXXLL motif) lie at residues 1322–1326 (LRELL), 1365–1369 (LRKLL), and 1420–1424 (LVQLL). The RNB domain occupies 1581 to 1938 (REDCRAFLTF…VLQRQILLAL (358 aa)). The LXXLL motif 4 signature appears at 2259-2263 (LEGLP). An interaction with THRAP3 region spans residues 2382 to 2896 (PSRFLERQTY…RVCRRPTMPS (515 aa)). The region spanning 2400 to 2675 (LNPSQNVAVR…HMLDTQYRMH (276 aa)) is the UvrD-like helicase ATP-binding 2 domain. Residue 2421–2428 (GPPGTGKT) coordinates ATP. Positions 2476–2480 (LAGLL) match the LXXLL motif 5 motif.

It belongs to the DNA2/NAM7 helicase family. In terms of assembly, interacts with PPARA (via DNA-binding domain) and PPARG; the interaction stimulates the transcriptional activity of PPARA and PPARG. Interacts with THRAP3; the interaction is direct and HELZ2 and THRAP3 synergistically enhance the transcriptional activity of PPARG. It is probably part of the peroxisome proliferator activated receptor alpha interacting complex (PRIC). In terms of tissue distribution, expressed in various tissues including heart, pancreas, skeletal muscle, colon, spleen, liver, kidney, lung, peripheral blood and placenta.

Its subcellular location is the cytoplasm. It carries out the reaction Exonucleolytic cleavage in the 3'- to 5'-direction to yield nucleoside 5'-phosphates.. The enzyme catalyses ATP + H2O = ADP + phosphate + H(+). In terms of biological role, can degrade highly structured RNAs through its concerted ATP-dependent RNA helicase and 3' to 5' exoribonuclease activities. Shows a strong preference for pyrimidine over purine residues for its nuclease activity. Acts as a transcriptional coactivator for a number of nuclear receptors including PPARA, PPARG, THRA, THRB and RXRA. This Homo sapiens (Human) protein is 3'-5' exoribonuclease HELZ2.